A 228-amino-acid chain; its full sequence is Probable transcriptional regulatory protein SilR (228 aa).

In terms of domain architecture, Response regulatory spans 2–116; sequence KILIVEDDIK…ELLARVRTLL (115 aa). At aspartate 51 the chain carries 4-aspartylphosphate. The segment at residues 125 to 225 is a DNA-binding region (ompR/PhoB-type); sequence ESQLKVADLS…VRGVGYMLEI (101 aa).

In terms of processing, phosphorylated by SilS.

The protein resides in the cytoplasm. Component of the sil cation-efflux system that confers resistance to silver. Probable member of a two-component regulatory system SilS/SilR. The polypeptide is Probable transcriptional regulatory protein SilR (silR) (Salmonella typhimurium).